The chain runs to 301 residues: Glucose-1-phosphate adenylyltransferase large subunit (301 aa).

It belongs to the bacterial/plant glucose-1-phosphate adenylyltransferase family. Heterotetramer.

The protein localises to the plastid. The protein resides in the chloroplast. It is found in the amyloplast. The enzyme catalyses alpha-D-glucose 1-phosphate + ATP + H(+) = ADP-alpha-D-glucose + diphosphate. Its pathway is glycan biosynthesis; starch biosynthesis. Insensitive to 3'phosphoglycerate and orthophosphate. Functionally, this protein plays a role in synthesis of starch. It catalyzes the synthesis of the activated glycosyl donor, ADP-glucose from Glc-1-P and ATP. The chain is Glucose-1-phosphate adenylyltransferase large subunit (AGA.1) from Triticum aestivum (Wheat).